We begin with the raw amino-acid sequence, 229 residues long: Thylakoid lumenal 19 kDa protein, chloroplastic (229 aa).

Its subcellular location is the plastid. The protein localises to the chloroplast thylakoid lumen. The sequence is that of Thylakoid lumenal 19 kDa protein, chloroplastic from Arabidopsis thaliana (Mouse-ear cress).